We begin with the raw amino-acid sequence, 881 residues long: Alanine--tRNA ligase (881 aa).

Positions 565, 569, 672, and 676 each coordinate Zn(2+).

Belongs to the class-II aminoacyl-tRNA synthetase family. It depends on Zn(2+) as a cofactor.

The protein localises to the cytoplasm. It carries out the reaction tRNA(Ala) + L-alanine + ATP = L-alanyl-tRNA(Ala) + AMP + diphosphate. Functionally, catalyzes the attachment of alanine to tRNA(Ala) in a two-step reaction: alanine is first activated by ATP to form Ala-AMP and then transferred to the acceptor end of tRNA(Ala). Also edits incorrectly charged Ser-tRNA(Ala) and Gly-tRNA(Ala) via its editing domain. In Novosphingobium aromaticivorans (strain ATCC 700278 / DSM 12444 / CCUG 56034 / CIP 105152 / NBRC 16084 / F199), this protein is Alanine--tRNA ligase.